Reading from the N-terminus, the 197-residue chain is Xanthine phosphoribosyltransferase (197 aa).

Residues leucine 20 and asparagine 27 each contribute to the xanthine site. A 5-phospho-alpha-D-ribose 1-diphosphate-binding site is contributed by 128 to 132 (ANGQA). Lysine 156 provides a ligand contact to xanthine.

The protein belongs to the purine/pyrimidine phosphoribosyltransferase family. Xpt subfamily. In terms of assembly, homodimer.

It localises to the cytoplasm. The enzyme catalyses XMP + diphosphate = xanthine + 5-phospho-alpha-D-ribose 1-diphosphate. The protein operates within purine metabolism; XMP biosynthesis via salvage pathway; XMP from xanthine: step 1/1. Converts the preformed base xanthine, a product of nucleic acid breakdown, to xanthosine 5'-monophosphate (XMP), so it can be reused for RNA or DNA synthesis. In Bacillus cytotoxicus (strain DSM 22905 / CIP 110041 / 391-98 / NVH 391-98), this protein is Xanthine phosphoribosyltransferase.